A 152-amino-acid chain; its full sequence is Ribosome maturation factor RimP (152 aa).

The protein belongs to the RimP family.

It localises to the cytoplasm. In terms of biological role, required for maturation of 30S ribosomal subunits. This is Ribosome maturation factor RimP from Ectopseudomonas mendocina (strain ymp) (Pseudomonas mendocina).